A 215-amino-acid chain; its full sequence is Pyrrolidone-carboxylate peptidase (215 aa).

Active-site residues include Glu80, Cys143, and His167.

Belongs to the peptidase C15 family. As to quaternary structure, homotetramer.

The protein resides in the cytoplasm. The enzyme catalyses Release of an N-terminal pyroglutamyl group from a polypeptide, the second amino acid generally not being Pro.. Functionally, removes 5-oxoproline from various penultimate amino acid residues except L-proline. The protein is Pyrrolidone-carboxylate peptidase of Bacillus thuringiensis (strain Al Hakam).